A 363-amino-acid polypeptide reads, in one-letter code: S-methylmethionine--homocysteine S-methyltransferase BHMT2 (363 aa).

The Hcy-binding domain maps to 11-305 (KGILERLDSG…YHIRAIAEEL (295 aa)). Positions 208, 290, and 291 each coordinate Zn(2+). S321 carries the post-translational modification Phosphoserine.

Homotetramer. Requires Zn(2+) as cofactor. As to expression, expressed in fetal heart, lung, liver, kidney and eye.

It carries out the reaction S-methyl-L-methionine + L-homocysteine = 2 L-methionine + H(+). The protein operates within amino-acid biosynthesis; L-methionine biosynthesis via de novo pathway; L-methionine from L-homocysteine (BhmT route): step 1/1. Functionally, involved in the regulation of homocysteine metabolism. Converts homocysteine to methionine using S-methylmethionine (SMM) as a methyl donor. The protein is S-methylmethionine--homocysteine S-methyltransferase BHMT2 (Bhmt2) of Mus musculus (Mouse).